A 434-amino-acid polypeptide reads, in one-letter code: Double-stranded RNA-binding protein 2 (434 aa).

2 DRBM domains span residues 1-70 (MYKN…ALSN) and 87-155 (VYKN…SLKQ). Positions 402–434 (EKTASKETERAEFKDSSKGEPETARERLENLKI) are disordered.

As to quaternary structure, heterodimer with DRB1 or DRB5. Interacts with DCL1 and DCL5.

It localises to the cytoplasm. Its function is as follows. Binds double-stranded RNA. May be involved in RNA-mediated silencing. The sequence is that of Double-stranded RNA-binding protein 2 (DRB2) from Arabidopsis thaliana (Mouse-ear cress).